The following is a 488-amino-acid chain: Glycogen synthase (488 aa).

Residue Arg20 coordinates ADP-alpha-D-glucose.

This sequence belongs to the glycosyltransferase 1 family. Bacterial/plant glycogen synthase subfamily.

The enzyme catalyses [(1-&gt;4)-alpha-D-glucosyl](n) + ADP-alpha-D-glucose = [(1-&gt;4)-alpha-D-glucosyl](n+1) + ADP + H(+). It functions in the pathway glycan biosynthesis; glycogen biosynthesis. Synthesizes alpha-1,4-glucan chains using ADP-glucose. The polypeptide is Glycogen synthase (Chlorobaculum tepidum (strain ATCC 49652 / DSM 12025 / NBRC 103806 / TLS) (Chlorobium tepidum)).